A 605-amino-acid chain; its full sequence is DNA mismatch repair protein MutL (605 aa).

This sequence belongs to the DNA mismatch repair MutL/HexB family.

Its function is as follows. This protein is involved in the repair of mismatches in DNA. It is required for dam-dependent methyl-directed DNA mismatch repair. May act as a 'molecular matchmaker', a protein that promotes the formation of a stable complex between two or more DNA-binding proteins in an ATP-dependent manner without itself being part of a final effector complex. The polypeptide is DNA mismatch repair protein MutL (Exiguobacterium sp. (strain ATCC BAA-1283 / AT1b)).